Consider the following 231-residue polypeptide: MAFKFVVFAAALAYANAGLLGAPAVATYAAGPAVAYSARPAVSTAYINQAAPFLAHAAPLAVAHAAPYAVHAPAVGASHQSVVRSLGGNQAVSHYSKAVDSAFSSVRKFDTRITNDALLRAHAPVAVAHAAPVVVHLTAAHAPVVSSYAHAPLVSSYAAHAPLVSSYAAHAPLVSSYAAHAPVLSTAYAAHAPVVSSYAAPVVARTAAVGYSPAAVVSHTSFTGLGASYAW.

Positions 1–17 (MAFKFVVFAAALAYANA) are cleaved as a signal peptide. 2 tandem repeats follow at residues 130-133 (AAPV) and 199-202 (AAPV).

Functionally, component of the cuticle of Tenebrio molitor. This Tenebrio molitor (Yellow mealworm beetle) protein is Cuticle protein LPCP-23 (LPCP-23).